The following is a 474-amino-acid chain: Aspartyl/glutamyl-tRNA(Asn/Gln) amidotransferase subunit B (474 aa).

Belongs to the GatB/GatE family. GatB subfamily. Heterotrimer of A, B and C subunits.

The enzyme catalyses L-glutamyl-tRNA(Gln) + L-glutamine + ATP + H2O = L-glutaminyl-tRNA(Gln) + L-glutamate + ADP + phosphate + H(+). It carries out the reaction L-aspartyl-tRNA(Asn) + L-glutamine + ATP + H2O = L-asparaginyl-tRNA(Asn) + L-glutamate + ADP + phosphate + 2 H(+). In terms of biological role, allows the formation of correctly charged Asn-tRNA(Asn) or Gln-tRNA(Gln) through the transamidation of misacylated Asp-tRNA(Asn) or Glu-tRNA(Gln) in organisms which lack either or both of asparaginyl-tRNA or glutaminyl-tRNA synthetases. The reaction takes place in the presence of glutamine and ATP through an activated phospho-Asp-tRNA(Asn) or phospho-Glu-tRNA(Gln). The polypeptide is Aspartyl/glutamyl-tRNA(Asn/Gln) amidotransferase subunit B (Wolbachia sp. subsp. Brugia malayi (strain TRS)).